Consider the following 331-residue polypeptide: 5,10-methylenetetrahydromethanopterin reductase (331 aa).

Belongs to the mer family.

Its subcellular location is the cytoplasm. The enzyme catalyses 5-methyl-5,6,7,8-tetrahydromethanopterin + oxidized coenzyme F420-(gamma-L-Glu)(n) + H(+) = 5,10-methylenetetrahydromethanopterin + reduced coenzyme F420-(gamma-L-Glu)(n). It functions in the pathway one-carbon metabolism; methanogenesis from CO(2); methyl-coenzyme M from 5,10-methylene-5,6,7,8-tetrahydromethanopterin: step 1/2. Functionally, catalyzes the reversible reduction of methylene-H(4)MPT to methyl-H(4)MPT. The protein is 5,10-methylenetetrahydromethanopterin reductase of Methanocaldococcus jannaschii (strain ATCC 43067 / DSM 2661 / JAL-1 / JCM 10045 / NBRC 100440) (Methanococcus jannaschii).